Reading from the N-terminus, the 146-residue chain is Large ribosomal subunit protein bL19 (146 aa).

The segment at Ala116 to Glu146 is disordered. Residues Lys119–Glu146 are compositionally biased toward basic and acidic residues.

As to quaternary structure, part of the 50S risobomal subunit. Contacts protein L14. Forms a bridge to the 30S subunit in the 70S ribosome, contacting the 16S rRNA.

Contacts the 16S rRNA of the 30S subunit (part of bridge B6), connecting the 2 subunits. The polypeptide is Large ribosomal subunit protein bL19 (rplS) (Thermus thermophilus (strain ATCC 27634 / DSM 579 / HB8)).